The primary structure comprises 277 residues: UBX domain-containing protein 10 (277 aa).

The interval 1-102 (MAIEAPVNFA…APDEMPELLL (102 aa)) is disordered. Polar residues predominate over residues 16-31 (TVVSTAGDSSTWQPSS). The span at 35-50 (HVIRPKSAKGRKRPNL) shows a compositional bias: basic residues. Residues 60-77 (SPSALSSSPPPRSSGSPS) are compositionally biased toward low complexity. Serine 88 bears the Phosphoserine mark. Residues 191 to 268 (DEEPRLLLAV…GILHKSVLGI (78 aa)) enclose the UBX domain.

Belongs to the UBXN10 family. Interacts with CLUAP1; the interaction is direct and mediates interaction with the intraflagellar transport complex B (IFT-B). Interacts with VCP; the interaction is direct.

The protein resides in the cell projection. Its subcellular location is the cilium. Functionally, VCP/p97-binding protein required for ciliogenesis. Acts as a tethering factor that facilitates recruitment of VCP/p97 to the intraflagellar transport complex B (IFT-B) in cilia. UBX domain-containing proteins act as tethering factors for VCP/p97 and may specify substrate specificity of VCP/p97. The polypeptide is UBX domain-containing protein 10 (Mus musculus (Mouse)).